The following is a 367-amino-acid chain: GPN-loop GTPase 1 (367 aa).

Residues glycine 15–threonine 22 and glycine 18–threonine 23 contribute to the GTP site. The Gly-Pro-Asn (GPN)-loop; involved in dimer interface motif lies at glycine 75–asparagine 77. Asparagine 178–aspartate 181 contributes to the GTP binding site. Residues glutamate 247–leucine 290 adopt a coiled-coil conformation. The interval valine 306–alanine 332 is disordered. Serine 311 is modified (phosphoserine). The span at aspartate 312–alanine 332 shows a compositional bias: acidic residues.

It belongs to the GPN-loop GTPase family. In terms of assembly, heterodimers with gpn2 or fet5/gpn3. Binds to RNA polymerase II (RNAPII).

It localises to the cytoplasm. In terms of biological role, small GTPase required for proper nuclear import of RNA polymerase II (RNAPII). May act at an RNAP assembly step prior to nuclear import. This is GPN-loop GTPase 1 from Schizosaccharomyces pombe (strain 972 / ATCC 24843) (Fission yeast).